Reading from the N-terminus, the 328-residue chain is MANSASPEQNQNHCSAINNSIPLMQGNLPTLTLSGKIRVTVTFFLFLLSATFNASFLLKLQKWTQKKEKGKKLSRMKLLLKHLTLANLLETLIVMPLDGMWNITVQWYAGELLCKVLSYLKLFSMYAPAFMMVVISLDRSLAITRPLALKSNSKVGQSMVGLAWILSSVFAGPQLYIFRMIHLADSSGQTKVFSQCVTHCSFSQWWHQAFYNFFTFSCLFIIPLFIMLICNAKIIFTLTRVLHQDPHELQLNQSKNNIPRARLKTLKMTVAFATSFTVCWTPYYVLGIWYWFDPEMLNRLSDPVNHFFFLFAFLNPCFDPLIYGYFSL.

The Extracellular segment spans residues 1-38; it reads MANSASPEQNQNHCSAINNSIPLMQGNLPTLTLSGKIR. Asn-18 carries N-linked (GlcNAc...) asparagine glycosylation. Residues 39-58 form a helical membrane-spanning segment; sequence VTVTFFLFLLSATFNASFLL. Residues 59-77 lie on the Cytoplasmic side of the membrane; sequence KLQKWTQKKEKGKKLSRMK. A helical membrane pass occupies residues 78-97; that stretch reads LLLKHLTLANLLETLIVMPL. Residues 98 to 115 lie on the Extracellular side of the membrane; the sequence is DGMWNITVQWYAGELLCK. Asn-102 carries an N-linked (GlcNAc...) asparagine glycan. A disulfide bridge links Cys-114 with Cys-196. A helical transmembrane segment spans residues 116-137; sequence VLSYLKLFSMYAPAFMMVVISL. Residues 138–164 are Cytoplasmic-facing; that stretch reads DRSLAITRPLALKSNSKVGQSMVGLAW. Residues 165–184 form a helical membrane-spanning segment; the sequence is ILSSVFAGPQLYIFRMIHLA. Topologically, residues 185 to 212 are extracellular; sequence DSSGQTKVFSQCVTHCSFSQWWHQAFYN. Residues 213–232 form a helical membrane-spanning segment; sequence FFTFSCLFIIPLFIMLICNA. Residues 233-281 are Cytoplasmic-facing; it reads KIIFTLTRVLHQDPHELQLNQSKNNIPRARLKTLKMTVAFATSFTVCWT. The helical transmembrane segment at 282-300 threads the bilayer; that stretch reads PYYVLGIWYWFDPEMLNRL. The Extracellular portion of the chain corresponds to 301 to 306; the sequence is SDPVNH. A helical transmembrane segment spans residues 307–326; sequence FFFLFAFLNPCFDPLIYGYF. Residues 327-328 are Cytoplasmic-facing; it reads SL.

It belongs to the G-protein coupled receptor 1 family. Pituitary, ovary, testis, breast and prostate but not in liver and spleen.

The protein resides in the cell membrane. Receptor for gonadotropin releasing hormone (GnRH) that mediates the action of GnRH to stimulate the secretion of the gonadotropic hormones luteinizing hormone (LH) and follicle-stimulating hormone (FSH). This receptor mediates its action by association with G-proteins that activate a phosphatidylinositol-calcium second messenger system. Isoform 2 may act as an inhibitor of GnRH-R signaling. This Homo sapiens (Human) protein is Gonadotropin-releasing hormone receptor (GNRHR).